The chain runs to 392 residues: MRDVAIIGYGQTKFGELWERSFRSLIVEAGVKAVEAAGIDGKDIDEMYVGNMSAGLFVGQEHIASLIAEHAGLNPIPSTRVEAACASGSLALRQAVLNVASGASDVVLVGGVEKMTDVVDATSAISSASDQEWEALFGATFPSLYAMMAQRYMYEYGLTLEELSMWSVIMHENASKNRYAQFPFKVTLEQVLNSSPVAEPLRLLHCSPVSDGAAALIVCEAEKAKEFVNKDDIIYIKASVQASDTIALHSRESITSLKAAKVASEKAYKMANIEPKDVDVAEVHDCFAINGLILMEELGFCKKGEAGKIVYDKKIAIDYDGFPAVNPSGGLKAAGHALGATGIRQVGEIYWQLKQDKEVKDRQVEIKNGYGITVNVGGTGGTVCIHILSDKR.

Cysteine 85 acts as the Acyl-thioester intermediate in catalysis. Residues cysteine 206, serine 207, valine 209, and lysine 332 each coordinate CoA. Catalysis depends on histidine 336, which acts as the Proton acceptor.

Belongs to the thiolase-like superfamily. Thiolase family. Interacts with HMG-CoA synthase (HMGCS) that catalyzes the second step in the pathway and with a DUF35 protein. The acetoacetyl-CoA thiolase/HMG-CoA synthase complex channels the intermediate via a fused CoA-binding site, which allows for efficient coupling of the endergonic thiolase reaction with the exergonic HMGCS reaction.

The catalysed reaction is 2 acetyl-CoA = acetoacetyl-CoA + CoA. Its pathway is metabolic intermediate biosynthesis; (R)-mevalonate biosynthesis; (R)-mevalonate from acetyl-CoA: step 1/3. Functionally, catalyzes the condensation of two acetyl-coA molecules into acetoacetyl-CoA. Functions in the mevalonate (MVA) pathway leading to isopentenyl diphosphate (IPP), a key precursor for the biosynthesis of isoprenoid compounds that are building blocks of archaeal membrane lipids. In Methanocaldococcus jannaschii (strain ATCC 43067 / DSM 2661 / JAL-1 / JCM 10045 / NBRC 100440) (Methanococcus jannaschii), this protein is Acetyl-CoA acetyltransferase.